Here is a 20-residue protein sequence, read N- to C-terminus: Antifungal protein J (20 aa).

The protein resides in the vacuole. Functionally, inhibitor of serine proteases chymotrypsin, pepsin and trypsin. Has strong antifungal activity against the human pathogenic fungi C.albicans TIMM 1768, S.cerevisiae KCTC 7296 and T.beigelli KCTC 7707, but lacks antifungal activity against the plant pathogenic fungi C.gloeosporioides KACC 40003, C.coccodes KACC 40803 and D.bryoniae KACC 40669. Lacks hemolytic activity against human erythrocytes. In Solanum tuberosum (Potato), this protein is Antifungal protein J.